We begin with the raw amino-acid sequence, 1939 residues long: MSSDQEMAIFGEAAPYLRKSEKERIEAQNRPFDAKTSVFVAEPKESFVKGTIQSREGGKVTVKTEAGATLTVKEDQVFPMNPPKFDKIEDMAMMTHLHEPGVLYNLKERYAAWMIYTYSGLFCVTVNPYKWLPVYNPEVVTAYRGKKRQEAPPHIFSISDNAYQFMLTDRENQSILITGESGAGKTVNTKRVIQYFATIAVTGEKKKEEPTSGKMQGTLEDQIISANPLLEAFGNAKTVRNDNSSRFGKFIRIHFGTTGKLASADIETYLLEKSRVTFQLKAERSYHIFYQITSNRKPELIEMLLITTNPYDYPFISQGEISVASIDDQEELIATDSAIDILGFTNEEKVSIYKLTGAVMHYGNLKFKQKQREEQAEPDGTEVADKAAYLQSLNSADLLKALCYPRVKVGNEYVTKGQTVEQVTNAVGALAKAVYEKMFLWMVTRINQQLDTKQPRQYFIGVLDIAGFEIFDFNSLEQLCINFTNEKLQQFFNHHMFVLEQEEYKREGIEWTFIDFGMDLAACIELIEKPMGIFSILEEECMFPKATDTSFKNKLYEQHLGKSANFQKPKPAKGKVEAHFSLIHYAGTVDYNITGWLDKNKDPLNDTVVGLYQKSALKTLAFLFSGAQTGEAEAGGTKKGGKKKGSSFQTVSALFRENLNKLMTNLRSTHPHFVRCIIPNETKTPGAMEHELVLHQLRCNGVLEGIRICRKGFPSRILYADFKQRYKVLNASAIPEGQYIDSKKASEKLLASIDIDHTQYKFGHTKVFFKAGLLGLLEEMRDDKLAQLITRTQARCRGFLARVEYQKMVERRESIFCIQYNIRAFMNVKHWPWMKLFFKIKPLLKSAESEKEMATMKEEFQKTKDELAKSEAKRKELEEKMVTLLKEKNDLQLQVQAEAEGLADAEERCDQLIKTKIQLEAKIKEVTERAEDEEEINAELTAKKRKLEDECSELKKDIDDLELTLAKVEKEKHATENKVKNLTEEMAGLDETIAKLTKEKKALQEAHQQTLDDLQAEEDKVNTLTKAKTKLEQQVDDLEGSLEQEKKLRMDLERAKRKLEGDLKLAQESIMDIENEKQQLDEKLKKKEFEISNLQSKIEDEQALAIQLQKKIKELQARIEELEEEIEAERASRAKAEKQRSDLSRELEEISERLEEAGGATSAQIEMNKKREAEFQKMRRDLEEATLQHEATAAALRKKHADSVAELGEQIDNLQRVKQKLEKEKSEMKMEIDDLASNMETVSKAKGNLEKMCRTLEDQLSELKSKEEEQQRLINDLTAQRGRLQTESGEFSRQLDEKEALVSQLSRGKQAYTQQIEELKRQLEEEIKAKNALAHALQSSRHDCDLLREQYEEEQESKAELQRALSKANTEVAQWRTKYETDAIQRTEELEEAKKKLAQRLQAAEEHVEAVNAKCASLEKTKQRLQNEVEDLMLDVERTNAACAALDKKQRNFDKILAEWKQKYEETHAELEASQKEARSLGTELFKMKNAYEESLDQLETLKRENKNLQQEISDLTEQIAEGGKRIHELEKIKKQVEQEKSEIQAALEEAEASLEHEEGKILRIQLELNQVKSEVDRKIAEKDEEIDQLKRNHVRVVESMQSMLDAEIRSRNDAIRLKKKMEGDLNEMEIQLNHANRMAAEALRNYRNTQGILKDTQIHLDDALRGQEDLKEQLAMVERRANLLQAEIEELRATLEQTERSRKVAEQELLDASERVQLLHTQNTSLINTKKKLETDISQMQGEMEDILQEARNAEEKAKKAITDAAMMAEELKKEQDTSAHLERMKKNMEQTVKDLQHRLDEAEQLALKGGKKQIQKLEARVRELEGEVESEQKRNAEAVKGLRKHERRVKELTYQTEEDRKNILRLQDLVDKLQAKVKSYKRQAEEAEEQSNTNLSKFRKLQHELEEAEERADIAESQVNKLRVKSREVHTKVISEE.

A Myosin N-terminal SH3-like domain is found at 33–82 (DAKTSVFVAEPKESFVKGTIQSREGGKVTVKTEAGATLTVKEDQVFPMNP). Residues threonine 64 and threonine 69 each carry the phosphothreonine modification. In terms of domain architecture, Myosin motor spans 86–782 (DKIEDMAMMT…LLGLLEEMRD (697 aa)). The residue at position 130 (lysine 130) is an N6,N6,N6-trimethyllysine. An ATP-binding site is contributed by 179–186 (GESGAGKT). Tyrosine 389 bears the Phosphotyrosine mark. Phosphoserine is present on serine 392. Threonine 419 is subject to Phosphothreonine. Serine 625 carries the phosphoserine modification. Residues 659 to 681 (LNKLMTNLRSTHPHFVRCIIPNE) form an actin-binding region. The residue at position 757 (histidine 757) is a Pros-methylhistidine. The tract at residues 761-775 (KFGHTKVFFKAGLLG) is actin-binding. An IQ domain is found at 785–814 (LAQLITRTQARCRGFLARVEYQKMVERRES). Positions 843 to 1939 (LLKSAESEKE…EVHTKVISEE (1097 aa)) form a coiled coil. A phosphoserine mark is found at serine 1092 and serine 1096. Disordered regions lie at residues 1126 to 1147 (IEAE…SREL) and 1153 to 1172 (RLEE…KKRE). Positions 1128–1147 (AERASRAKAEKQRSDLSREL) are enriched in basic and acidic residues. Residues serine 1162 and serine 1237 each carry the phosphoserine modification. Threonine 1241 carries the phosphothreonine modification. The residue at position 1243 (serine 1243) is a Phosphoserine. Threonine 1255 bears the Phosphothreonine mark. Residue serine 1261 is modified to Phosphoserine. Residue threonine 1286 is modified to Phosphothreonine. 4 positions are modified to phosphoserine: serine 1288, serine 1292, serine 1303, and serine 1306. A Phosphotyrosine modification is found at tyrosine 1464. Residue threonine 1467 is modified to Phosphothreonine. Residue serine 1474 is modified to Phosphoserine. Tyrosine 1492 carries the phosphotyrosine modification. At serine 1495 the chain carries Phosphoserine. Threonine 1501 carries the phosphothreonine modification. Position 1514 is a phosphoserine (serine 1514). Threonine 1517 is modified (phosphothreonine). 7 positions are modified to phosphoserine: serine 1542, serine 1554, serine 1574, serine 1600, serine 1603, serine 1714, and serine 1726. 2 positions are modified to phosphothreonine: threonine 1730 and threonine 1736. Serine 1739 carries the phosphoserine modification. Positions 1885–1915 (QAEEAEEQSNTNLSKFRKLQHELEEAEERAD) are disordered.

It belongs to the TRAFAC class myosin-kinesin ATPase superfamily. Myosin family. In terms of assembly, muscle myosin is a hexameric protein that consists of 2 heavy chain subunits (MHC), 2 alkali light chain subunits (MLC) and 2 regulatory light chain subunits (MLC-2). Interacts with GCSAM.

The protein localises to the cytoplasm. The protein resides in the myofibril. Functionally, myosins are actin-based motor molecules with ATPase activity essential for muscle contraction. The protein is Myosin-2 (MYH2) of Sus scrofa (Pig).